A 200-amino-acid polypeptide reads, in one-letter code: NADH-quinone oxidoreductase subunit C (200 aa).

This sequence belongs to the complex I 30 kDa subunit family. As to quaternary structure, NDH-1 is composed of 14 different subunits. Subunits NuoB, C, D, E, F, and G constitute the peripheral sector of the complex.

It localises to the cell inner membrane. The enzyme catalyses a quinone + NADH + 5 H(+)(in) = a quinol + NAD(+) + 4 H(+)(out). Functionally, NDH-1 shuttles electrons from NADH, via FMN and iron-sulfur (Fe-S) centers, to quinones in the respiratory chain. The immediate electron acceptor for the enzyme in this species is believed to be ubiquinone. Couples the redox reaction to proton translocation (for every two electrons transferred, four hydrogen ions are translocated across the cytoplasmic membrane), and thus conserves the redox energy in a proton gradient. This chain is NADH-quinone oxidoreductase subunit C, found in Thiobacillus denitrificans (strain ATCC 25259 / T1).